A 262-amino-acid polypeptide reads, in one-letter code: MRYKNMFETLKKQEKMAFIPFVTLGDPNYALSFEIVKTLIASGVSALELGFAFSDPVADGVTIQASHLRALKHASMAKNFQLLRAIRDYNPHIPIGLLAYANLIFSYGVDNFYAQIKECGVDSVLIADMPLIEKELVLKSAQKHQIKQIFIASPNASNKDLERAAMHSQGYIYTLARSGVTGASRILENDASAIIKTLKTFSPTPALLGFGISKKEHIKNAKGMGADGVICGSALVKIIEENLNDENAMLERIKGFIGEMIS.

Active-site proton acceptor residues include Glu48 and Asp59.

The protein belongs to the TrpA family. In terms of assembly, tetramer of two alpha and two beta chains.

The enzyme catalyses (1S,2R)-1-C-(indol-3-yl)glycerol 3-phosphate + L-serine = D-glyceraldehyde 3-phosphate + L-tryptophan + H2O. It functions in the pathway amino-acid biosynthesis; L-tryptophan biosynthesis; L-tryptophan from chorismate: step 5/5. In terms of biological role, the alpha subunit is responsible for the aldol cleavage of indoleglycerol phosphate to indole and glyceraldehyde 3-phosphate. The chain is Tryptophan synthase alpha chain from Helicobacter pylori (strain Shi470).